The chain runs to 317 residues: MQSPDGQETGRPAAILIAGPTASGKSALGLRIARAFGGTVINTDSMQVYADLRVLSARPTAEEEGLAPHRLYGSIDGAVNFSVGHFQRQAAALLSEMDAGTLPVFVGGTGLYFRSLDEGISDLPEVPDAIRQRIRAEADGQPTETLHAALALRDPESAQGLRPSDRMRVMRALEIHAATGRSIGSFHDARVPGPLAGKPLLKLFLTTEREALRQRIDARFVTMMEQGALDEVAALRERRLDPLLPVMRAHGVPGLTAYLDGTISREEAIQRGQGDTRRYAKRQFTWFRHQMGEDWRWTTPEAAWSQVEARLSAPAGR.

ATP is bound at residue 19–26; the sequence is GPTASGKS. Substrate is bound at residue 21–26; that stretch reads TASGKS. The interaction with substrate tRNA stretch occupies residues 44–47; sequence DSMQ.

Belongs to the IPP transferase family. In terms of assembly, monomer. Requires Mg(2+) as cofactor.

The enzyme catalyses adenosine(37) in tRNA + dimethylallyl diphosphate = N(6)-dimethylallyladenosine(37) in tRNA + diphosphate. Its function is as follows. Catalyzes the transfer of a dimethylallyl group onto the adenine at position 37 in tRNAs that read codons beginning with uridine, leading to the formation of N6-(dimethylallyl)adenosine (i(6)A). In Methylorubrum extorquens (strain CM4 / NCIMB 13688) (Methylobacterium extorquens), this protein is tRNA dimethylallyltransferase.